We begin with the raw amino-acid sequence, 430 residues long: MKQAFRVALGFLVLWASVLHAEVRIEITQGVDSARPIGVVPFKWMGPGTPPEEIGAIVGADLRNSGKFNPIDAARMPQQPSTAAEVTPAAWTALGIDAVVVGQVQPSADGSYVVSYQLVDTSGSAGSILAQNQYKVTKQWLRYSAHTVSDEVFEKLTGIKGAFRTRIAYVVKTNGGKFPHELRVSDYDGYNQFVVHRSPEPLMSPAWSPDGSKIAYVTFESGKSALVIQTLANGAIRQVASFPRHNGAPAFSPDGTKLAFALSKSGSLNLYVMDLASGQISQVTDGRSNNTEPSWFPDSQNLAYTSDQGGRPQVYKVNINGGVPQRITWEGSQNQNADVSPDGKFLVLVSSNGGAQHIAKQDLETGAVQVLTDTLLDETPSIAPNGTMVIYSSTQGLGSVLQLVSTDGRFKARLPATDGQVKFPAWSPYL.

The signal sequence occupies residues Met1–Ala21.

It belongs to the TolB family. The Tol-Pal system is composed of five core proteins: the inner membrane proteins TolA, TolQ and TolR, the periplasmic protein TolB and the outer membrane protein Pal. They form a network linking the inner and outer membranes and the peptidoglycan layer.

Its subcellular location is the periplasm. Part of the Tol-Pal system, which plays a role in outer membrane invagination during cell division and is important for maintaining outer membrane integrity. TolB occupies a key intermediary position in the Tol-Pal system because it communicates directly with both membrane-embedded components, Pal in the outer membrane and TolA in the inner membrane. The protein is Tol-Pal system protein TolB of Yersinia pestis.